Reading from the N-terminus, the 315-residue chain is Calcium homeostasis modulator protein 6 (315 aa).

The Cytoplasmic portion of the chain corresponds to 1-21; it reads MEKFRAVLDLHVKHHSALGYG. A helical membrane pass occupies residues 22–37; it reads LVTLLTAGGERIFSAV. Over 38–46 the chain is Extracellular; sequence AFQCPCSAA. 3 disulfide bridges follow: Cys-41–Cys-126, Cys-43–Cys-155, and Cys-139–Cys-146. A helical transmembrane segment spans residues 47–68; it reads WNLPYGLVFLLVPALALFLLGY. The Cytoplasmic portion of the chain corresponds to 69–102; sequence VLSARTWRLLTGCCSSARASCGSALRGSLVCTQI. The helical transmembrane segment at 103-127 threads the bilayer; that stretch reads SAAAALAPLTWVAVALLGGAFYECA. At 128-169 the chain is on the extracellular side; the sequence is ATGSAAFAQRLCLGRNRSCAAELPLVPCNQAKASDVQDLLKD. Residues 170 to 192 traverse the membrane as a helical segment; sequence LKAQSQVLGWILIAVVIIILLIF. The Cytoplasmic portion of the chain corresponds to 193–315; it reads TSVTRCLSPV…SSGINSTPEL (123 aa).

Belongs to the CALHM family. In terms of assembly, oligomerizes to form decameric and undecameric channels. N-glycosylated. As to expression, placenta.

Its subcellular location is the cell membrane. It carries out the reaction ATP(in) = ATP(out). Pore-forming subunit of an ATP-permeable channel. In response to pathogen-derived and proinflammatory stimuli, relocates from intracellular compartments to NK-dendritic cell and NK-macrophage immune synapses where it mediates ATP efflux and NK cell activation involved in antimicrobial and antitumor responses. May assemble to form gap junction channel-like structures with gating and ion conductance likely regulated by membrane lipids and voltage rather than by extracellular calcium levels. This chain is Calcium homeostasis modulator protein 6, found in Homo sapiens (Human).